The primary structure comprises 314 residues: 2,3-dihydroxyphenylpropionate/2,3-dihydroxicinnamic acid 1,2-dioxygenase (314 aa).

H115 serves as the catalytic Proton donor. Catalysis depends on H179, which acts as the Proton acceptor.

The protein belongs to the LigB/MhpB extradiol dioxygenase family. As to quaternary structure, homotetramer. Fe(2+) serves as cofactor.

It carries out the reaction 3-(2,3-dihydroxyphenyl)propanoate + O2 = (2Z,4E)-2-hydroxy-6-oxonona-2,4-dienedioate + H(+). The enzyme catalyses (2E)-3-(2,3-dihydroxyphenyl)prop-2-enoate + O2 = (2Z,4E,7E)-2-hydroxy-6-oxonona-2,4,7-trienedioate + H(+). The protein operates within aromatic compound metabolism; 3-phenylpropanoate degradation. Its function is as follows. Catalyzes the non-heme iron(II)-dependent oxidative cleavage of 2,3-dihydroxyphenylpropionic acid and 2,3-dihydroxicinnamic acid into 2-hydroxy-6-ketononadienedioate and 2-hydroxy-6-ketononatrienedioate, respectively. This chain is 2,3-dihydroxyphenylpropionate/2,3-dihydroxicinnamic acid 1,2-dioxygenase, found in Rhodococcus jostii (strain RHA1).